Reading from the N-terminus, the 117-residue chain is Holo-[acyl-carrier-protein] synthase (117 aa).

Residues Asp-8 and Glu-58 each coordinate Mg(2+).

The protein belongs to the P-Pant transferase superfamily. AcpS family. Mg(2+) serves as cofactor.

The protein resides in the cytoplasm. It carries out the reaction apo-[ACP] + CoA = holo-[ACP] + adenosine 3',5'-bisphosphate + H(+). Transfers the 4'-phosphopantetheine moiety from coenzyme A to a Ser of acyl-carrier-protein. This chain is Holo-[acyl-carrier-protein] synthase, found in Enterococcus faecalis (strain ATCC 700802 / V583).